Reading from the N-terminus, the 314-residue chain is 4-hydroxy-3-methylbut-2-enyl diphosphate reductase (314 aa).

Position 12 (C12) interacts with [4Fe-4S] cluster. (2E)-4-hydroxy-3-methylbut-2-enyl diphosphate contacts are provided by H41 and H74. Dimethylallyl diphosphate is bound by residues H41 and H74. 2 residues coordinate isopentenyl diphosphate: H41 and H74. C96 is a [4Fe-4S] cluster binding site. Residue H124 coordinates (2E)-4-hydroxy-3-methylbut-2-enyl diphosphate. H124 is a binding site for dimethylallyl diphosphate. An isopentenyl diphosphate-binding site is contributed by H124. The active-site Proton donor is E126. T167 is a binding site for (2E)-4-hydroxy-3-methylbut-2-enyl diphosphate. C197 is a [4Fe-4S] cluster binding site. Residues S225, S226, N227, and S269 each contribute to the (2E)-4-hydroxy-3-methylbut-2-enyl diphosphate site. 4 residues coordinate dimethylallyl diphosphate: S225, S226, N227, and S269. The isopentenyl diphosphate site is built by S225, S226, N227, and S269.

Belongs to the IspH family. Requires [4Fe-4S] cluster as cofactor.

The catalysed reaction is isopentenyl diphosphate + 2 oxidized [2Fe-2S]-[ferredoxin] + H2O = (2E)-4-hydroxy-3-methylbut-2-enyl diphosphate + 2 reduced [2Fe-2S]-[ferredoxin] + 2 H(+). It carries out the reaction dimethylallyl diphosphate + 2 oxidized [2Fe-2S]-[ferredoxin] + H2O = (2E)-4-hydroxy-3-methylbut-2-enyl diphosphate + 2 reduced [2Fe-2S]-[ferredoxin] + 2 H(+). It participates in isoprenoid biosynthesis; dimethylallyl diphosphate biosynthesis; dimethylallyl diphosphate from (2E)-4-hydroxy-3-methylbutenyl diphosphate: step 1/1. The protein operates within isoprenoid biosynthesis; isopentenyl diphosphate biosynthesis via DXP pathway; isopentenyl diphosphate from 1-deoxy-D-xylulose 5-phosphate: step 6/6. Catalyzes the conversion of 1-hydroxy-2-methyl-2-(E)-butenyl 4-diphosphate (HMBPP) into a mixture of isopentenyl diphosphate (IPP) and dimethylallyl diphosphate (DMAPP). Acts in the terminal step of the DOXP/MEP pathway for isoprenoid precursor biosynthesis. This Glaesserella parasuis serovar 5 (strain SH0165) (Haemophilus parasuis) protein is 4-hydroxy-3-methylbut-2-enyl diphosphate reductase.